The following is a 464-amino-acid chain: Soluble pyridine nucleotide transhydrogenase (464 aa).

Residue aspartate 35 to cysteine 44 coordinates FAD.

This sequence belongs to the class-I pyridine nucleotide-disulfide oxidoreductase family. It depends on FAD as a cofactor.

It localises to the cytoplasm. The enzyme catalyses NAD(+) + NADPH = NADH + NADP(+). Conversion of NADPH, generated by peripheral catabolic pathways, to NADH, which can enter the respiratory chain for energy generation. This is Soluble pyridine nucleotide transhydrogenase from Azotobacter vinelandii (strain DJ / ATCC BAA-1303).